The sequence spans 103 residues: MQNQRIRIRLKAFDHRLIDKSTVEIVETAKRTGAQVRGPIPLPTRKERFTVLISPHVNKDARDQYEIRTHKRLIDIVEPTDKTVDALMRLDLAAGVDVQISLG.

This sequence belongs to the universal ribosomal protein uS10 family. In terms of assembly, part of the 30S ribosomal subunit.

Involved in the binding of tRNA to the ribosomes. This is Small ribosomal subunit protein uS10 from Blochmanniella pennsylvanica (strain BPEN).